A 163-amino-acid chain; its full sequence is Cyclic pyranopterin monophosphate synthase (163 aa).

Residues 79–81 and 117–118 each bind substrate; these read LCH and ME. Residue aspartate 132 is part of the active site.

This sequence belongs to the MoaC family. Homohexamer; trimer of dimers.

It carries out the reaction (8S)-3',8-cyclo-7,8-dihydroguanosine 5'-triphosphate = cyclic pyranopterin phosphate + diphosphate. Its pathway is cofactor biosynthesis; molybdopterin biosynthesis. In terms of biological role, catalyzes the conversion of (8S)-3',8-cyclo-7,8-dihydroguanosine 5'-triphosphate to cyclic pyranopterin monophosphate (cPMP). This chain is Cyclic pyranopterin monophosphate synthase, found in Chloroflexus aurantiacus (strain ATCC 29366 / DSM 635 / J-10-fl).